A 199-amino-acid chain; its full sequence is Peptidyl-tRNA hydrolase (199 aa).

Tyr25 lines the tRNA pocket. Residue His30 is the Proton acceptor of the active site. TRNA contacts are provided by Tyr76, Asn78, and Asn124.

It belongs to the PTH family. In terms of assembly, monomer.

The protein localises to the cytoplasm. The enzyme catalyses an N-acyl-L-alpha-aminoacyl-tRNA + H2O = an N-acyl-L-amino acid + a tRNA + H(+). In terms of biological role, hydrolyzes ribosome-free peptidyl-tRNAs (with 1 or more amino acids incorporated), which drop off the ribosome during protein synthesis, or as a result of ribosome stalling. Functionally, catalyzes the release of premature peptidyl moieties from peptidyl-tRNA molecules trapped in stalled 50S ribosomal subunits, and thus maintains levels of free tRNAs and 50S ribosomes. This is Peptidyl-tRNA hydrolase from Mycobacterium leprae (strain Br4923).